A 92-amino-acid polypeptide reads, in one-letter code: CRISPR-associated endoribonuclease Cas2 1 (92 aa).

Asp10 is a Mg(2+) binding site.

The protein belongs to the CRISPR-associated endoribonuclease Cas2 protein family. In terms of assembly, homodimer, forms a heterotetramer with a Cas1 homodimer. The cofactor is Mg(2+).

CRISPR (clustered regularly interspaced short palindromic repeat), is an adaptive immune system that provides protection against mobile genetic elements (viruses, transposable elements and conjugative plasmids). CRISPR clusters contain sequences complementary to antecedent mobile elements and target invading nucleic acids. CRISPR clusters are transcribed and processed into CRISPR RNA (crRNA). Functions as a ssRNA-specific endoribonuclease. Involved in the integration of spacer DNA into the CRISPR cassette. The sequence is that of CRISPR-associated endoribonuclease Cas2 1 from Thermodesulfovibrio yellowstonii (strain ATCC 51303 / DSM 11347 / YP87).